Consider the following 426-residue polypeptide: MLDIKRIRNDFDQIAEKLARRGVDEKTLHDLKELDFKRRQLLIKSEEAKAERNTASAAIAQAKRNQEDASEQIADMQKLSAEIKALDAQLVEIDGQLKTFTTTLPNIPADDVPLGADEDENVEMRRWGKPRQFDFDIKAHWDLGEDLDILDWERGSKVTGSRFLFYKGLGARLERAIYNFMLDEHAKEGYTEVIPPYMVNHDSMFGTGQYPKFKEDTFELADNDYVLIPTAEVPLTNYYRGEIIDGKELPIYFTAMSPSFRSEAGSAGRDTRGLIRLHQFHKVEMVKFAKPEDSYNELEKMTANAENILQKLELPYRVITLCTGDMGFSAAKTYDLEVWIPAQNTYREISSCSNTEDFQARRAQIRYRDEVDGKVKLLHTLNGSGLAVGRTVAAILENYQNADGSVTIPEVLRPYIGGVQVISPQS.

An L-serine-binding site is contributed by 230 to 232 (TAE). An ATP-binding site is contributed by 261–263 (RSE). Residue Glu-284 participates in L-serine binding. 348–351 (EISS) serves as a coordination point for ATP. Ser-384 contributes to the L-serine binding site.

Belongs to the class-II aminoacyl-tRNA synthetase family. Type-1 seryl-tRNA synthetase subfamily. As to quaternary structure, homodimer. The tRNA molecule binds across the dimer.

It is found in the cytoplasm. The enzyme catalyses tRNA(Ser) + L-serine + ATP = L-seryl-tRNA(Ser) + AMP + diphosphate + H(+). The catalysed reaction is tRNA(Sec) + L-serine + ATP = L-seryl-tRNA(Sec) + AMP + diphosphate + H(+). It functions in the pathway aminoacyl-tRNA biosynthesis; selenocysteinyl-tRNA(Sec) biosynthesis; L-seryl-tRNA(Sec) from L-serine and tRNA(Sec): step 1/1. In terms of biological role, catalyzes the attachment of serine to tRNA(Ser). Is also able to aminoacylate tRNA(Sec) with serine, to form the misacylated tRNA L-seryl-tRNA(Sec), which will be further converted into selenocysteinyl-tRNA(Sec). This is Serine--tRNA ligase from Streptococcus mutans serotype c (strain ATCC 700610 / UA159).